An 82-amino-acid chain; its full sequence is Cortexin-1 (82 aa).

The segment at Met1–Val20 is disordered. The chain crosses the membrane as a helical span at residues Thr30–Val50.

It belongs to the cortexin family. As to expression, neuron specific.

It localises to the membrane. Functionally, may mediate extracellular or intracellular signaling of cortical neurons during forebrain development. This is Cortexin-1 (Ctxn1) from Rattus norvegicus (Rat).